A 461-amino-acid chain; its full sequence is MPIKRMWGGRFEEAGDQLVNQFNASISFDQEMAQEDIEGSLAHVKMLKETQILSAEDADKIIAGLKKLRERLTSEGLPFSIDNEDIHMNIEALLTEEIGPVAGKLHTGRSRNDQVATDLHLYVKKRLPIIINELKKLQAELVDKAAENVETIMPGYTHMQHAQPISYGHYLMAYFQMFQRDVERFEFNQQHTDLSPLGAAALAGTTFPIDRQLSAKYLGFAGPYHNSLDAVSDRDFALEFLSNASILMMHLSRLCEELIYWCSYEFGYLELADSYSTGSSIMPQKKNPDMAELIRGKVGRVYGDLFSLLTTMKGLPLAYNKDMQEDKEGLFDAVKTILPSIKIMTGMIATLQVKKEAMEHATHHDFSNATELADYLATKGIPFREAHEIVGELVLKGLKTGTNLVDIPLDEYKKISPKIEEDVYTCLQPKVAVERRNSYGGTGFDQVRQQIKDAKKILEGK.

This sequence belongs to the lyase 1 family. Argininosuccinate lyase subfamily.

Its subcellular location is the cytoplasm. The catalysed reaction is 2-(N(omega)-L-arginino)succinate = fumarate + L-arginine. It functions in the pathway amino-acid biosynthesis; L-arginine biosynthesis; L-arginine from L-ornithine and carbamoyl phosphate: step 3/3. This Limosilactobacillus reuteri subsp. reuteri (strain JCM 1112) (Lactobacillus reuteri) protein is Argininosuccinate lyase.